The primary structure comprises 412 residues: Serine hydroxymethyltransferase (412 aa).

(6S)-5,6,7,8-tetrahydrofolate contacts are provided by residues leucine 117 and 121–123 (GHL). Lysine 226 is subject to N6-(pyridoxal phosphate)lysine.

It belongs to the SHMT family. In terms of assembly, homodimer. Requires pyridoxal 5'-phosphate as cofactor.

The protein resides in the cytoplasm. The enzyme catalyses (6R)-5,10-methylene-5,6,7,8-tetrahydrofolate + glycine + H2O = (6S)-5,6,7,8-tetrahydrofolate + L-serine. It participates in one-carbon metabolism; tetrahydrofolate interconversion. Its pathway is amino-acid biosynthesis; glycine biosynthesis; glycine from L-serine: step 1/1. Catalyzes the reversible interconversion of serine and glycine with tetrahydrofolate (THF) serving as the one-carbon carrier. This reaction serves as the major source of one-carbon groups required for the biosynthesis of purines, thymidylate, methionine, and other important biomolecules. Also exhibits THF-independent aldolase activity toward beta-hydroxyamino acids, producing glycine and aldehydes, via a retro-aldol mechanism. This Staphylococcus saprophyticus subsp. saprophyticus (strain ATCC 15305 / DSM 20229 / NCIMB 8711 / NCTC 7292 / S-41) protein is Serine hydroxymethyltransferase.